The chain runs to 310 residues: Vomeronasal type-1 receptor 53 (310 aa).

Residues 1–20 (MNKANLLHTDINLKITLFSE) are Extracellular-facing. A helical transmembrane segment spans residues 21-41 (VSVGISANSILIFAHLCMLLG). Over 42-50 (ENRPKPIDL) the chain is Cytoplasmic. Residues 51-71 (YIAFFSLTQLMLLITMGLIAV) traverse the membrane as a helical segment. The Extracellular segment spans residues 72–93 (DMFMPWGRWDSTTCQSLIYLHR). Cys85 and Cys172 are joined by a disulfide. A helical membrane pass occupies residues 94 to 114 (LLRGLTLSATCLLNVLWTITL). The Cytoplasmic portion of the chain corresponds to 115–134 (SPRSSCLTKFKHKSLQHISC). Residues 135–155 (AFLFLCVLYMSFNSHLFISII) form a helical membrane-spanning segment. Topologically, residues 156-183 (AYPNLTLENFMYVTQSCSLIPLSYFRKS) are extracellular. A glycan (N-linked (GlcNAc...) asparagine) is linked at Asn159. A helical membrane pass occupies residues 184–204 (MFSIPMAIREALLIGLMALSG). Over 205–238 (GYMVAHLWRHKKQAQHLHRTSLSSKASPEQRATR) the chain is Cytoplasmic. The chain crosses the membrane as a helical span at residues 239 to 259 (TIMLLMSFFVVLYILDLVIFH). The Extracellular portion of the chain corresponds to 260–268 (SRMKFKDGS). Residues 269–289 (ILYGVQIIVSHSYATVSPFVF) traverse the membrane as a helical segment. The Cytoplasmic segment spans residues 290-310 (ICTEKRITNFLRSMCGRIVNI).

This sequence belongs to the G-protein coupled receptor 1 family.

It is found in the cell membrane. Putative pheromone receptor implicated in the regulation of social and reproductive behavior. The protein is Vomeronasal type-1 receptor 53 (Vmn1r53) of Mus musculus (Mouse).